The sequence spans 713 residues: Polyribonucleotide nucleotidyltransferase (713 aa).

Residues Asp-495 and Asp-501 each coordinate Mg(2+). The region spanning 562–621 (PRLLTLKIPVDMIGLVIGPGGKTIKRIVEETGAKVDIEDDGTVVVSSIDGAKALAAKQII) is the KH domain. The S1 motif domain occupies 631–700 (DKVYLGTVTR…QKGRINLTRR (70 aa)).

Belongs to the polyribonucleotide nucleotidyltransferase family. Requires Mg(2+) as cofactor.

The protein resides in the cytoplasm. The enzyme catalyses RNA(n+1) + phosphate = RNA(n) + a ribonucleoside 5'-diphosphate. Involved in mRNA degradation. Catalyzes the phosphorolysis of single-stranded polyribonucleotides processively in the 3'- to 5'-direction. The sequence is that of Polyribonucleotide nucleotidyltransferase from Gloeobacter violaceus (strain ATCC 29082 / PCC 7421).